The sequence spans 203 residues: Small ribosomal subunit protein uS4c (203 aa).

Positions 19 to 43 are disordered; that stretch reads PGLTNKSPKAGSDLRKQPRSRKKSQ. One can recognise an S4 RNA-binding domain in the interval 89–152; that stretch reads MRLDNILFRL…KSRTLIQNSL (64 aa).

This sequence belongs to the universal ribosomal protein uS4 family. In terms of assembly, part of the 30S ribosomal subunit. Contacts protein S5. The interaction surface between S4 and S5 is involved in control of translational fidelity.

The protein localises to the plastid. The protein resides in the chloroplast. In terms of biological role, one of the primary rRNA binding proteins, it binds directly to 16S rRNA where it nucleates assembly of the body of the 30S subunit. Its function is as follows. With S5 and S12 plays an important role in translational accuracy. The polypeptide is Small ribosomal subunit protein uS4c (rps4) (Jasminum nudiflorum (Winter jasmine)).